A 217-amino-acid chain; its full sequence is ATP synthase F(0) complex subunit a (217 aa).

Transmembrane regions (helical) follow at residues 20 to 40 (MNWI…WILP), 70 to 90 (PAFL…FSLF), 100 to 120 (MVFS…LSTC), 126 to 146 (MIAH…MTII), 166 to 188 (LIAG…IIFI), and 193 to 215 (MIFE…SLYS).

Belongs to the ATPase A chain family. Component of the ATP synthase complex composed at least of ATP5F1A/subunit alpha, ATP5F1B/subunit beta, ATP5MC1/subunit c (homooctomer), MT-ATP6/subunit a, MT-ATP8/subunit 8, ATP5ME/subunit e, ATP5MF/subunit f, ATP5MG/subunit g, ATP5MK/subunit k, ATP5MJ/subunit j, ATP5F1C/subunit gamma, ATP5F1D/subunit delta, ATP5F1E/subunit epsilon, ATP5PF/subunit F6, ATP5PB/subunit b, ATP5PD/subunit d, ATP5PO/subunit OSCP. ATP synthase complex consists of a soluble F(1) head domain (subunits alpha(3) and beta(3)) - the catalytic core - and a membrane F(0) domain - the membrane proton channel (subunits c, a, 8, e, f, g, k and j). These two domains are linked by a central stalk (subunits gamma, delta, and epsilon) rotating inside the F1 region and a stationary peripheral stalk (subunits F6, b, d, and OSCP). Interacts with DNAJC30; interaction is direct.

It localises to the mitochondrion inner membrane. The catalysed reaction is H(+)(in) = H(+)(out). Subunit a, of the mitochondrial membrane ATP synthase complex (F(1)F(0) ATP synthase or Complex V) that produces ATP from ADP in the presence of a proton gradient across the membrane which is generated by electron transport complexes of the respiratory chain. ATP synthase complex consist of a soluble F(1) head domain - the catalytic core - and a membrane F(1) domain - the membrane proton channel. These two domains are linked by a central stalk rotating inside the F(1) region and a stationary peripheral stalk. During catalysis, ATP synthesis in the catalytic domain of F(1) is coupled via a rotary mechanism of the central stalk subunits to proton translocation. With the subunit c (ATP5MC1), forms the proton-conducting channel in the F(0) domain, that contains two crucial half-channels (inlet and outlet) that facilitate proton movement from the mitochondrial intermembrane space (IMS) into the matrix. Protons are taken up via the inlet half-channel and released through the outlet half-channel, following a Grotthuss mechanism. In Rhopalosiphum padi (Bird cherry-oat aphid), this protein is ATP synthase F(0) complex subunit a.